We begin with the raw amino-acid sequence, 207 residues long: Ribonuclease HII (207 aa).

Residues 12 to 201 (DLVAGVDEVG…VRAAWEVREG (190 aa)) form the RNase H type-2 domain. The a divalent metal cation site is built by aspartate 18, glutamate 19, and aspartate 110.

It belongs to the RNase HII family. Requires Mn(2+) as cofactor. Mg(2+) serves as cofactor.

The protein localises to the cytoplasm. The enzyme catalyses Endonucleolytic cleavage to 5'-phosphomonoester.. In terms of biological role, endonuclease that specifically degrades the RNA of RNA-DNA hybrids. This Pseudomonas putida (strain ATCC 700007 / DSM 6899 / JCM 31910 / BCRC 17059 / LMG 24140 / F1) protein is Ribonuclease HII.